Here is a 275-residue protein sequence, read N- to C-terminus: Phosphate import ATP-binding protein PstB (275 aa).

In terms of domain architecture, ABC transporter spans 28–270 (IDCRDIRVFY…PREKRTEDYI (243 aa)). Position 60–67 (60–67 (GPSGCGKS)) interacts with ATP.

Belongs to the ABC transporter superfamily. Phosphate importer (TC 3.A.1.7) family. As to quaternary structure, the complex is composed of two ATP-binding proteins (PstB), two transmembrane proteins (PstC and PstA) and a solute-binding protein (PstS).

Its subcellular location is the cell inner membrane. It catalyses the reaction phosphate(out) + ATP + H2O = ADP + 2 phosphate(in) + H(+). In terms of biological role, part of the ABC transporter complex PstSACB involved in phosphate import. Responsible for energy coupling to the transport system. This chain is Phosphate import ATP-binding protein PstB, found in Hyphomonas neptunium (strain ATCC 15444).